A 465-amino-acid polypeptide reads, in one-letter code: MSNKMWGGRFTDRPDAIMEEINVSIDVDRHLYAQDITASKAHAAMLAAQGIITANDAKNIGKGLDTILSEITAGKFTFKRALEDIHMNVESRLAELIGPAAGRLHTARSRNDQVATDFRLYVRDVLDETDAALAALQQALAERALEQADTVMPGFTHLQTAQPVTFGHHLMAYVEMVARDRGRFQDARKRLNESPLGAAALAGTSFPIDRHATAAKLGFDRPMANSLDAVSDRDFVLETLSAASICAVHLSRFAEEIVIWTSPLVGLIRLSDKFTTGSSIMPQKRNPDAAELVRAKTGRVIGALNGLLIVMKGLPLAYQKDMQEDKQGAMEGFAALSLAIRAITGMVRDLEPEPERMKLAAGEGYATATDLADWLVRTLKMPFREAHHVTGRIVGLAAKKGVALHELPLAEMQSVEKRITKDVLAVLSVESSVKSRTSYGGTAPKNVRSQAKAWLKRLAKDTKTR.

The protein belongs to the lyase 1 family. Argininosuccinate lyase subfamily.

It localises to the cytoplasm. It carries out the reaction 2-(N(omega)-L-arginino)succinate = fumarate + L-arginine. It functions in the pathway amino-acid biosynthesis; L-arginine biosynthesis; L-arginine from L-ornithine and carbamoyl phosphate: step 3/3. This is Argininosuccinate lyase from Rhodopseudomonas palustris (strain ATCC BAA-98 / CGA009).